Consider the following 272-residue polypeptide: Dermonecrotic toxin LvSicTox-alphaIC1bii (272 aa).

The active site involves histidine 5. Mg(2+)-binding residues include glutamate 25 and aspartate 27. The active-site Nucleophile is histidine 41. 2 cysteine pairs are disulfide-bonded: cysteine 45-cysteine 51 and cysteine 47-cysteine 189. Aspartate 84 contributes to the Mg(2+) binding site.

This sequence belongs to the arthropod phospholipase D family. Class II subfamily. Mg(2+) serves as cofactor. As to expression, expressed by the venom gland.

It localises to the secreted. The catalysed reaction is an N-(acyl)-sphingosylphosphocholine = an N-(acyl)-sphingosyl-1,3-cyclic phosphate + choline. The enzyme catalyses an N-(acyl)-sphingosylphosphoethanolamine = an N-(acyl)-sphingosyl-1,3-cyclic phosphate + ethanolamine. It catalyses the reaction a 1-acyl-sn-glycero-3-phosphocholine = a 1-acyl-sn-glycero-2,3-cyclic phosphate + choline. It carries out the reaction a 1-acyl-sn-glycero-3-phosphoethanolamine = a 1-acyl-sn-glycero-2,3-cyclic phosphate + ethanolamine. In terms of biological role, dermonecrotic toxins cleave the phosphodiester linkage between the phosphate and headgroup of certain phospholipids (sphingolipid and lysolipid substrates), forming an alcohol (often choline) and a cyclic phosphate. This toxin acts on sphingomyelin (SM). It may also act on ceramide phosphoethanolamine (CPE), lysophosphatidylcholine (LPC) and lysophosphatidylethanolamine (LPE), but not on lysophosphatidylserine (LPS), and lysophosphatidylglycerol (LPG). It acts by transphosphatidylation, releasing exclusively cyclic phosphate products as second products. Induces dermonecrosis, hemolysis, increased vascular permeability, edema, inflammatory response, and platelet aggregation. The polypeptide is Dermonecrotic toxin LvSicTox-alphaIC1bii (Loxosceles variegata (Recluse spider)).